The following is a 214-amino-acid chain: Probable nicotinate-nucleotide adenylyltransferase (214 aa).

It belongs to the NadD family.

The enzyme catalyses nicotinate beta-D-ribonucleotide + ATP + H(+) = deamido-NAD(+) + diphosphate. It functions in the pathway cofactor biosynthesis; NAD(+) biosynthesis; deamido-NAD(+) from nicotinate D-ribonucleotide: step 1/1. Catalyzes the reversible adenylation of nicotinate mononucleotide (NaMN) to nicotinic acid adenine dinucleotide (NaAD). This Rhodopirellula baltica (strain DSM 10527 / NCIMB 13988 / SH1) protein is Probable nicotinate-nucleotide adenylyltransferase.